A 173-amino-acid chain; its full sequence is Lipoprotein signal peptidase (173 aa).

2 helical membrane-spanning segments follow: residues 67 to 87 (WISL…PHLG) and 92 to 112 (MGFG…FAFG). Catalysis depends on residues D116 and D132. Residues 125–145 (FPVFNGADIAINLGLACLLIG) traverse the membrane as a helical segment. Positions 151–173 (SRTPAPARPASKQIREPTDTTGG) are disordered. The segment covering 163-173 (QIREPTDTTGG) has biased composition (basic and acidic residues).

It belongs to the peptidase A8 family.

The protein resides in the cell inner membrane. It catalyses the reaction Release of signal peptides from bacterial membrane prolipoproteins. Hydrolyzes -Xaa-Yaa-Zaa-|-(S,diacylglyceryl)Cys-, in which Xaa is hydrophobic (preferably Leu), and Yaa (Ala or Ser) and Zaa (Gly or Ala) have small, neutral side chains.. The protein operates within protein modification; lipoprotein biosynthesis (signal peptide cleavage). Functionally, this protein specifically catalyzes the removal of signal peptides from prolipoproteins. The chain is Lipoprotein signal peptidase from Gloeobacter violaceus (strain ATCC 29082 / PCC 7421).